The sequence spans 606 residues: Mitogen-activated protein kinase kinase kinase 7 (606 aa).

The interaction with MAPK8IP1 stretch occupies residues M1–Y300. The Protein kinase domain maps to I36–F291. ATP-binding positions include V42–V50 and K63. A Glycyl lysine isopeptide (Lys-Gly) (interchain with G-Cter in ubiquitin) cross-link involves residue K72. Catalysis depends on D156, which acts as the Proton acceptor. A Glycyl lysine isopeptide (Lys-Gly) (interchain with G-Cter in ubiquitin) cross-link involves residue K158. T184 and T187 each carry phosphothreonine; by autocatalysis. S192 is modified (phosphoserine; by autocatalysis). K209 participates in a covalent cross-link: Glycyl lysine isopeptide (Lys-Gly) (interchain with G-Cter in ubiquitin). 2 disordered regions span residues P301–V338 and K354–D391. Residues D306–V338 are compositionally biased toward polar residues. Positions S361–S375 are enriched in low complexity. Phosphoserine is present on residues S367, S389, and S439. Positions L443–Q452 are enriched in polar residues. The segment at L443–S492 is disordered. Low complexity predominate over residues V453–R463. Residue S455 is modified to Phosphoserine.

The protein belongs to the protein kinase superfamily. STE Ser/Thr protein kinase family. MAP kinase kinase kinase subfamily. Can form homodimer. Binds both upstream activators and downstream substrates in multimolecular complexes. Interacts with TAB1/MAP3K7IP1, TAB2/MAP3K7IP2 and TAB3/MAP3K7IP3. Identified in the TRIKA2 complex composed of MAP3K7/TAK1, TAB1/MAP3K7IP1 and TAB2/MAP3K7IP2. Interacts with PPM1L and PPM1B/PP2CB. Interaction with PP2A and PPP6C leads to its repressed activity. Interacts with TRAF6 and TAB1/MAP3K7IP1; during IL-1 signaling. Interacts with TAOK1 and TAOK2; interaction with TAOK2 interferes with MAP3K7 interaction with IKKA, thus preventing NF-kappa-B activation. Interacts with DYNC2I2 (via WD domains). Interacts with CYLD and RBCK1. Interacts with TGFBR1; induces MAP3K7/TAK1 activation by TRAF6. Interacts with MAPK8IP1 and SMAD6. Interacts with isoform 1 of VRK2. Interacts with DAB2; the interaction is induced by TGF-beta stimulation and may mediate TGF-beta stimulated JNK activation. Interacts with TRIM5. Part of a complex containing ITCH, NDFIP1 and MAP3K7. Interacts with PLEKHM1 (via N- and C-terminus). Found in a complex with SH3RF1, RAC2, MAP2K7/MKK7, MAPK8IP1/JIP1, MAPK8/JNK1 and MAPK9/JNK2. Interacts with SASH1. Interacts with RIPK1. Mg(2+) is required as a cofactor. Post-translationally, association with TAB1/MAP3K7IP1 promotes autophosphorylation at Ser-192 and subsequent activation. Association with TAB2/MAP3K7IP2, itself associated with free unanchored Lys-63 polyubiquitin chain, promotes autophosphorylation and subsequent activation of MAP3K7. Dephosphorylation at Ser-192 by PPM1B/PP2CB and at Thr-187 by PP2A and PPP6C leads to inactivation. Deubiquitinated by USP19; leading to negative regulation of TNF-alpha- and IL-1beta-triggered NF-kappa-B activation. 'Lys-48'-linked polyubiquitination at Lys-72 is induced by TNFalpha, and leads to proteasomal degradation. Undergoes 'Lys-48'-linked polyubiquitination catalyzed by ITCH. 'Lys-63'-linked polyubiquitination at Lys-158 by TRIM8 does not lead to proteasomal degradation but contributes to autophosphorylation and activation. Deubiquitinated by CYLD, a protease that selectively cleaves 'Lys-63'-linked ubiquitin chains.

It localises to the cytoplasm. The protein resides in the cell membrane. It catalyses the reaction L-seryl-[protein] + ATP = O-phospho-L-seryl-[protein] + ADP + H(+). The catalysed reaction is L-threonyl-[protein] + ATP = O-phospho-L-threonyl-[protein] + ADP + H(+). With respect to regulation, activated by pro-inflammatory cytokines and in response to physical and chemical stresses, including osmotic stress, oxidative stress, arsenic and ultraviolet light irradiation. Activated by 'Lys-63'-linked polyubiquitination and by autophosphorylation. Association with TAB1/MAP3K7IP1 and TAB2/MAP3K7IP2 promotes activation through autophosphorylation, whereas PPM1B/PP2CB, PP2A and PPP6C dephosphorylation leads to inactivation. Ceramides are also able to activate MAP3K7/TAK1. Its function is as follows. Serine/threonine kinase which acts as an essential component of the MAP kinase signal transduction pathway. Plays an important role in the cascades of cellular responses evoked by changes in the environment. Mediates signal transduction of TRAF6, various cytokines including interleukin-1 (IL-1), transforming growth factor-beta (TGFB), TGFB-related factors like BMP2 and BMP4, toll-like receptors (TLR), tumor necrosis factor receptor CD40 and B-cell receptor (BCR). Once activated, acts as an upstream activator of the MKK/JNK signal transduction cascade and the p38 MAPK signal transduction cascade through the phosphorylation and activation of several MAP kinase kinases like MAP2K1/MEK1, MAP2K3/MKK3, MAP2K6/MKK6 and MAP2K7/MKK7. These MAP2Ks in turn activate p38 MAPKs and c-jun N-terminal kinases (JNKs); both p38 MAPK and JNK pathways control the transcription factors activator protein-1 (AP-1). Independently of MAP2Ks and p38 MAPKs, acts as a key activator of NF-kappa-B by promoting activation of the I-kappa-B-kinase (IKK) core complex. Mechanistically, recruited to polyubiquitin chains of RIPK2 and IKBKG/NEMO via TAB2/MAP3K7IP2 and TAB3/MAP3K7IP3, and catalyzes phosphorylation and activation of IKBKB/IKKB component of the IKK complex, leading to NF-kappa-B activation. In osmotic stress signaling, plays a major role in the activation of MAPK8/JNK1, but not that of NF-kappa-B. Promotes TRIM5 capsid-specific restriction activity. Phosphorylates RIPK1 at 'Ser-321' which positively regulates RIPK1 interaction with RIPK3 to promote necroptosis but negatively regulates RIPK1 kinase activity and its interaction with FADD to mediate apoptosis. Phosphorylates STING1 in response to cGAMP-activation, promoting association between STEEP1 and STING1 and STING1 translocation to COPII vesicles. The protein is Mitogen-activated protein kinase kinase kinase 7 (Map3k7) of Rattus norvegicus (Rat).